A 151-amino-acid chain; its full sequence is 3-hydroxyacyl-[acyl-carrier-protein] dehydratase FabZ (151 aa).

His57 is a catalytic residue.

Belongs to the thioester dehydratase family. FabZ subfamily.

Its subcellular location is the cytoplasm. The enzyme catalyses a (3R)-hydroxyacyl-[ACP] = a (2E)-enoyl-[ACP] + H2O. Functionally, involved in unsaturated fatty acids biosynthesis. Catalyzes the dehydration of short chain beta-hydroxyacyl-ACPs and long chain saturated and unsaturated beta-hydroxyacyl-ACPs. The sequence is that of 3-hydroxyacyl-[acyl-carrier-protein] dehydratase FabZ from Tolumonas auensis (strain DSM 9187 / NBRC 110442 / TA 4).